The sequence spans 415 residues: AP-3 complex subunit mu (415 aa).

Residues 178–414 enclose the MHD domain; it reads SNEVYVDLVE…QTRAGEFDVR (237 aa).

The protein belongs to the adaptor complexes medium subunit family. As to quaternary structure, adaptor protein complex 3 (AP-3) is a heterotetramer composed of two large adaptins (delta-type subunit and beta-type subunit), a medium adaptin (mu-type subunit) and a small adaptin (sigma-type subunit).

The protein resides in the cytoplasm. It is found in the golgi apparatus. The protein localises to the cytoplasmic vesicle membrane. In terms of biological role, part of the AP-3 complex, an adaptor-related complex which seems to be clathrin-associated. The complex is associated with the Golgi region as well as more peripheral structures. It facilitates the budding of vesicles from the Golgi membrane and may be directly involved in trafficking to the vacuole. It also functions in maintaining the identity of lytic vacuoles and in regulating the transition between storage and lytic vacuoles. The protein is AP-3 complex subunit mu (AP3M) of Arabidopsis thaliana (Mouse-ear cress).